The chain runs to 26 residues: Conotoxin Eb6.18 (26 aa).

2 cysteine pairs are disulfide-bonded: Cys-7-Cys-18 and Cys-13-Cys-25.

This sequence belongs to the conotoxin O1 superfamily. As to expression, expressed by the venom duct.

It localises to the secreted. In Conus ebraeus (Hebrew cone), this protein is Conotoxin Eb6.18 (E1).